Here is a 392-residue protein sequence, read N- to C-terminus: Selenide, water dikinase 1 (392 aa).

N-acetylserine is present on Ser2. Residue Cys31 is part of the active site. ATP-binding positions include Lys32, Gly67–Asp69, Asp87, Asp110, and Gly161–Thr164. Asp69 serves as a coordination point for Mg(2+). Position 110 (Asp110) interacts with Mg(2+). Position 265 (Asp265) interacts with Mg(2+).

This sequence belongs to the selenophosphate synthase 1 family. Class II subfamily. As to quaternary structure, homodimer. Heterodimer with isoform 3. Homodimer. Heterodimer with isoform 4. In terms of assembly, homodimer. Heterodimer with isoform 1. As to quaternary structure, homodimer. Heterodimer with isoform 2. Mg(2+) is required as a cofactor. Gradually expressed during the cell cycle until G2/M phase and then decreases. As to expression, gradually expressed during the cell cycle until S phase and then decreases.

The protein resides in the cell membrane. Its subcellular location is the nucleus membrane. The protein localises to the cytoplasm. It carries out the reaction hydrogenselenide + ATP + H2O = selenophosphate + AMP + phosphate + 2 H(+). Its activity is regulated as follows. Activated by phosphate ions and by potassium ions. Synthesizes selenophosphate from selenide and ATP. The chain is Selenide, water dikinase 1 (SEPHS1) from Homo sapiens (Human).